The primary structure comprises 644 residues: Exoribonuclease 2 (644 aa).

An RNB domain is found at 189–516; it reads RQDLTALNFV…NHRLLKAVIK (328 aa). An S1 motif domain is found at 561 to 643; that stretch reads NTRFAAEIID…ETRSIIARPA (83 aa).

Belongs to the RNR ribonuclease family. RNase II subfamily.

The protein resides in the cytoplasm. It carries out the reaction Exonucleolytic cleavage in the 3'- to 5'-direction to yield nucleoside 5'-phosphates.. Functionally, involved in mRNA degradation. Hydrolyzes single-stranded polyribonucleotides processively in the 3' to 5' direction. The polypeptide is Exoribonuclease 2 (Salmonella agona (strain SL483)).